Reading from the N-terminus, the 648-residue chain is Serine/threonine-protein kinase plk-1 (648 aa).

Residues 1–24 (MNRLPNIAKPPQKSNQRKEKAPPE) are disordered. In terms of domain architecture, Protein kinase spans 38 to 289 (YEKGRFLGKG…AKQVQRDGFF (252 aa)). ATP is bound by residues 44–52 (LGKGGFAHC) and Lys-67. Asp-161 (proton acceptor) is an active-site residue. 2 POLO box domains span residues 412–492 (WISK…YMND) and 514–596 (TLRV…RLMS). Residues 612 to 629 (PRSMAAARSASAGSRGPN) show a composition bias toward low complexity.

It belongs to the protein kinase superfamily. Ser/Thr protein kinase family. CDC5/Polo subfamily. As to quaternary structure, interacts with mex-5, mex-6 and spat-1. As to expression, embryos.

Its subcellular location is the cytoplasm. The protein resides in the cytoskeleton. It localises to the microtubule organizing center. It is found in the centrosome. The protein localises to the midbody. Its subcellular location is the nucleus. The protein resides in the chromosome. It localises to the centromere. It is found in the kinetochore. It catalyses the reaction L-seryl-[protein] + ATP = O-phospho-L-seryl-[protein] + ADP + H(+). The enzyme catalyses L-threonyl-[protein] + ATP = O-phospho-L-threonyl-[protein] + ADP + H(+). In terms of biological role, required for oocyte nuclear envelope breakdown before entry of oocyte into spermatheca. In meiotic cells, required for spindle dynamics and probably for spindle attachment to the chromosomes. Zygotic role in the development of the germline and nerve cord. In mitotic cells, plays a role in spindle organization and centrosome maturation. Involved in asymmetric nuclear localization of cdc-25.1 during embryogenesis which affects cell division timing. Together with plk-2, regulates cytoplasm polarity in early embryos. May play a minor role in chromosome pairing and synapsis during oocyte meiosis I. The sequence is that of Serine/threonine-protein kinase plk-1 (plk-1) from Caenorhabditis elegans.